A 311-amino-acid chain; its full sequence is Olfactory receptor 14I1 (311 aa).

At 1–26 (MDNLTKVTEFLLMEFSGIWELQVLHA) the chain is on the extracellular side. N-linked (GlcNAc...) asparagine glycosylation occurs at N3. The helical transmembrane segment at 27–47 (GLFLLIYLAVLVGNLLIIAVI) threads the bilayer. Residues 48-55 (TLDQHLHT) are Cytoplasmic-facing. Residues 56–76 (PMYFFLKNLSVLDLCYISVTV) form a helical membrane-spanning segment. Residues 77–92 (PKSIRNSLTRRSSISY) are Extracellular-facing. The helical transmembrane segment at 93–113 (LGCVAQVYFFSAFASAELAFL) threads the bilayer. An intrachain disulfide couples C95 to C188. The Cytoplasmic segment spans residues 114 to 141 (TVMSYDRYVAICHPLQYRAVMTSGGCYQ). The helical transmembrane segment at 142-162 (MAVTTWLSCFSYAAVHTGNMF) threads the bilayer. The Extracellular portion of the chain corresponds to 163 to 189 (REHVCRSSVIHQFFRDIPHVLALVSCE). The helical transmembrane segment at 190–210 (VFFVEFLTLALSSCLVLGCFI) threads the bilayer. Residues 211–241 (LMMISYFQIFSTVLRIPSGQSRAKAFSTCSP) are Cytoplasmic-facing. A helical transmembrane segment spans residues 242 to 262 (QLIVIMLFLTTGLFAALGPIA). The Extracellular portion of the chain corresponds to 263-269 (KALSIQD). A helical membrane pass occupies residues 270–290 (LVIALTYTVLPPFLNPIIYSL). At 291–311 (RNKEIKTAMWRLFVKIYFLQK) the chain is on the cytoplasmic side.

It belongs to the G-protein coupled receptor 1 family.

Its subcellular location is the cell membrane. Its function is as follows. Odorant receptor. The protein is Olfactory receptor 14I1 (OR14I1) of Homo sapiens (Human).